A 623-amino-acid polypeptide reads, in one-letter code: Protein EDS1L (623 aa).

Ala2 is modified (N-acetylalanine). Catalysis depends on Ser123, which acts as the Nucleophile. Active-site charge relay system residues include Asp187 and His317.

Homodimer. Interacts with RPS4, RPS6, SNC1, SRFR1, AvrRps4 and HopA1. Interacts with PAD4 (via N-terminus). Interacts with SAG101. EDS1-SAG101 and EDS1-PAD4 form separate complexes in pathogen-unchallenged cells.

The protein localises to the nucleus. Its subcellular location is the cytoplasm. It localises to the microsome. Functionally, positive regulator of basal resistance and of effector-triggered immunity specifically mediated by TIR-NB-LRR resistance proteins. Disruption by bacterial effector of EDS1-TIR-NB-LRR resistance protein interactions constitutes the first step in resistance activation. Triggers early plant defenses and hypersensitive response independently of PAD4, and then recruits PAD4 to potentiate plant defenses through the accumulation of salicylic acid. Nuclear localization is essential for basal and TIR-NB-LRR-conditioned immunity and for reprogramming defense gene expression, while cytoplasmic EDS1 is required to induce a complete immune response. Heterodimerization with PAD4 or SGA101 is necessary for TNL-mediated effector-triggered immunity. Contributes to nonhost resistance against E.amylovora. Has no direct lipase activity. In Arabidopsis thaliana (Mouse-ear cress), this protein is Protein EDS1L.